The sequence spans 428 residues: Phosphomethylpyrimidine synthase (428 aa).

Substrate is bound by residues Asn-66, Met-94, Tyr-123, His-162, Ser-184 to Gly-186, Asp-225 to Arg-228, and Glu-264. His-268 lines the Zn(2+) pocket. Residue Tyr-291 coordinates substrate. His-332 serves as a coordination point for Zn(2+). [4Fe-4S] cluster is bound by residues Cys-408, Cys-411, and Cys-415.

It belongs to the ThiC family. Requires [4Fe-4S] cluster as cofactor.

The enzyme catalyses 5-amino-1-(5-phospho-beta-D-ribosyl)imidazole + S-adenosyl-L-methionine = 4-amino-2-methyl-5-(phosphooxymethyl)pyrimidine + CO + 5'-deoxyadenosine + formate + L-methionine + 3 H(+). It functions in the pathway cofactor biosynthesis; thiamine diphosphate biosynthesis. Its function is as follows. Catalyzes the synthesis of the hydroxymethylpyrimidine phosphate (HMP-P) moiety of thiamine from aminoimidazole ribotide (AIR) in a radical S-adenosyl-L-methionine (SAM)-dependent reaction. The chain is Phosphomethylpyrimidine synthase from Sulfolobus acidocaldarius (strain ATCC 33909 / DSM 639 / JCM 8929 / NBRC 15157 / NCIMB 11770).